A 480-amino-acid polypeptide reads, in one-letter code: MAAVEAETGLLTLESLPTDPLLLILSFVDYRDLINCCYVSRRLSQLSTHDPLWRRHCKKYWLITEEEKARKNQCWKSLFIATYSDVGRYINHYAAIKKAWDDLKKYLEPRCPRMVLSLKEGAREEDLDAVEAQIGCKLPDDYRCSYRIHNGQKLVVPGLLGSMALSNHYRSEDLLDVDTAAGGFQQRQGLKYCLPLTFCIHTGLSQYIAVEAAEGRNKNEVFYQCPDQMARNPAAIDMFIIGATFTDWFTSYVNNVVSGGFPIIRDQIFRYIHDPECVATTGDITVSVSTSFLPELSSVHPPHYFFTYRIRIEMSRDALPEKACQLDSRYWRITNAKGDVEEVQGPGVVGEFPIISPGRIYEYTSCTTFSTTSGYMEGYYTFHFLYFKDKVFNVAIPRFHMACPTFRVSIARLEMGPDEYEEMEEEAEEEEEEENDDSADMDESDESDEDENESDEGEGEERRRRVFDVPIRRRRCSRLF.

The F-box domain maps to 10-56 (LLTLESLPTDPLLLILSFVDYRDLINCCYVSRRLSQLSTHDPLWRRH). Residues 278 to 408 (VATTGDITVS…FHMACPTFRV (131 aa)) form the ApaG domain. Residues 419 to 459 (EYEEMEEEAEEEEEEENDDSADMDESDESDEDENESDEGEG) are compositionally biased toward acidic residues. The disordered stretch occupies residues 419–464 (EYEEMEEEAEEEEEEENDDSADMDESDESDEDENESDEGEGEERRR).

Part of a SCF (SKP1-cullin-F-box) protein ligase complex SCF(FBXO3) consisting of FBXO3, SKP1, CUL1 and RBX1. Interacts with PML, interaction is direct and takes place either alone or within the SCF complex.

It localises to the nucleus. It participates in protein modification; protein ubiquitination. Its function is as follows. Substrate recognition component of the SCF (SKP1-CUL1-F-box protein)-type E3 ubiquitin ligase complex, SCF(FBXO3), which mediates the ubiquitination and subsequent proteasomal degradation of target proteins. Mediates the ubiquitination of HIPK2 and probably that of EP300, leading to rapid degradation by the proteasome. In the presence of PML, HIPK2 ubiquitination still occurs, but degradation is prevented. PML, HIPK2 and FBXO3 may act synergically to activate p53/TP53-dependent transactivation. The SCF(FBXO3) also acts as a regulator of inflammation by mediating ubiquitination and degradation of FBXL2 in response to lipopolysaccharide (LPS). The SCF(FBXO3) complex specifically recognizes FBXL2 phosphorylated at 'Thr-404' and promotes its ubiquitination. In Rattus norvegicus (Rat), this protein is F-box only protein 3 (Fbxo3).